Here is a 359-residue protein sequence, read N- to C-terminus: 5-formaminoimidazole-4-carboxamide-1-(beta)-D-ribofuranosyl 5'-monophosphate synthetase (359 aa).

2 residues coordinate 5-amino-1-(5-phospho-beta-D-ribosyl)imidazole-4-carboxamide: His27 and Ser94. One can recognise an ATP-grasp domain in the interval 116-340 (RRLLRWESER…FGEIVTMGRR (225 aa)). ATP is bound by residues 146-208 (PEDI…TNFC) and Glu230. Asn258 is a 5-amino-1-(5-phospho-beta-D-ribosyl)imidazole-4-carboxamide binding site. Residues Gln297 and Glu310 each coordinate Mg(2+).

It belongs to the phosphohexose mutase family. The cofactor is Mg(2+). Mn(2+) serves as cofactor.

It catalyses the reaction 5-amino-1-(5-phospho-beta-D-ribosyl)imidazole-4-carboxamide + formate + ATP = 5-formamido-1-(5-phospho-D-ribosyl)imidazole-4-carboxamide + ADP + phosphate. It participates in purine metabolism; IMP biosynthesis via de novo pathway; 5-formamido-1-(5-phospho-D-ribosyl)imidazole-4-carboxamide from 5-amino-1-(5-phospho-D-ribosyl)imidazole-4-carboxamide (formate route): step 1/1. Functionally, catalyzes the ATP- and formate-dependent formylation of 5-aminoimidazole-4-carboxamide-1-beta-d-ribofuranosyl 5'-monophosphate (AICAR) to 5-formaminoimidazole-4-carboxamide-1-beta-d-ribofuranosyl 5'-monophosphate (FAICAR) in the absence of folates. The polypeptide is 5-formaminoimidazole-4-carboxamide-1-(beta)-D-ribofuranosyl 5'-monophosphate synthetase (Methanopyrus kandleri (strain AV19 / DSM 6324 / JCM 9639 / NBRC 100938)).